A 215-amino-acid chain; its full sequence is ATP phosphoribosyltransferase (215 aa).

Belongs to the ATP phosphoribosyltransferase family. Short subfamily. Heteromultimer composed of HisG and HisZ subunits.

Its subcellular location is the cytoplasm. The catalysed reaction is 1-(5-phospho-beta-D-ribosyl)-ATP + diphosphate = 5-phospho-alpha-D-ribose 1-diphosphate + ATP. Its pathway is amino-acid biosynthesis; L-histidine biosynthesis; L-histidine from 5-phospho-alpha-D-ribose 1-diphosphate: step 1/9. Its function is as follows. Catalyzes the condensation of ATP and 5-phosphoribose 1-diphosphate to form N'-(5'-phosphoribosyl)-ATP (PR-ATP). Has a crucial role in the pathway because the rate of histidine biosynthesis seems to be controlled primarily by regulation of HisG enzymatic activity. This Cyanothece sp. (strain PCC 7425 / ATCC 29141) protein is ATP phosphoribosyltransferase.